We begin with the raw amino-acid sequence, 292 residues long: Zinc finger protein OZF (292 aa).

C2H2-type zinc fingers lie at residues 16–38, 44–66, 72–94, 100–122, 128–150, 156–178, 184–206, 212–234, 240–262, and 268–290; these read FACKVCGKIFSHKSTLTEHEHFH, FECNECGKAFSQKQYVIKHQNTH, LECNECGKSFSQKENLLTHQKIH, FECKDCGKAFIQKSNLIRHQRTH, FICKECGKTFSGKSNLTEHEKIH, FKCNECGTAFGQKKYLIKHQNIH, YECNECGKAFSQRTSLIVHVRIH, YECNVCGKAFSQSSSLTVHVRSH, YGCNECGKAFSQFSTLALHLRIH, and YQCSECGKAFSQKSHHIRHQKIH. Residues K28, K51, and K56 each participate in a glycyl lysine isopeptide (Lys-Gly) (interchain with G-Cter in SUMO2) cross-link. Glycyl lysine isopeptide (Lys-Gly) (interchain with G-Cter in SUMO) cross-links involve residues K157 and K169. K173 is covalently cross-linked (Glycyl lysine isopeptide (Lys-Gly) (interchain with G-Cter in SUMO2)). Residues 212–292 form an interaction with TERF2IP region; that stretch reads YECNVCGKAF…HIRHQKIHTH (81 aa).

Belongs to the krueppel C2H2-type zinc-finger protein family. Binds DNA. Interacts with SUMO conjugating enzyme UBC9/UBE2I. Interacts with the telomeric protein TERF2IP.

The protein localises to the nucleus. This Bos taurus (Bovine) protein is Zinc finger protein OZF (ZNF146).